Here is a 259-residue protein sequence, read N- to C-terminus: uncharacterized protein (259 aa).

The N-terminal stretch at 1–22 (MKHSKKLLLCISFLLITFFISG) is a signal peptide. A lipid anchor (N-palmitoyl cysteine) is attached at Cys-23. Residue Cys-23 is the site of S-diacylglycerol cysteine attachment.

The protein belongs to the staphylococcal tandem lipoprotein family.

The protein resides in the cell membrane. This is an uncharacterized protein from Staphylococcus epidermidis (strain ATCC 35984 / DSM 28319 / BCRC 17069 / CCUG 31568 / BM 3577 / RP62A).